The following is a 293-amino-acid chain: Glutamyl-Q tRNA(Asp) synthetase (293 aa).

Residues 26-30 (RYAPS) and D62 each bind L-glutamate. A 'HIGH' region motif is present at residues 29–39 (PSPTGALHLGN). Zn(2+) contacts are provided by C118, C120, Y131, and C135. L-glutamate is bound by residues Y178 and R196. The 'KMSKS' region motif lies at 234–238 (KLSKR). K237 provides a ligand contact to ATP.

This sequence belongs to the class-I aminoacyl-tRNA synthetase family. GluQ subfamily. It depends on Zn(2+) as a cofactor.

In terms of biological role, catalyzes the tRNA-independent activation of glutamate in presence of ATP and the subsequent transfer of glutamate onto a tRNA(Asp). Glutamate is transferred on the 2-amino-5-(4,5-dihydroxy-2-cyclopenten-1-yl) moiety of the queuosine in the wobble position of the QUC anticodon. This Parasynechococcus marenigrum (strain WH8102) protein is Glutamyl-Q tRNA(Asp) synthetase.